The sequence spans 131 residues: Ribosome-binding factor A (131 aa).

It belongs to the RbfA family. In terms of assembly, monomer. Binds 30S ribosomal subunits, but not 50S ribosomal subunits or 70S ribosomes.

It is found in the cytoplasm. Its function is as follows. One of several proteins that assist in the late maturation steps of the functional core of the 30S ribosomal subunit. Associates with free 30S ribosomal subunits (but not with 30S subunits that are part of 70S ribosomes or polysomes). Required for efficient processing of 16S rRNA. May interact with the 5'-terminal helix region of 16S rRNA. The polypeptide is Ribosome-binding factor A (Protochlamydia amoebophila (strain UWE25)).